The following is a 100-amino-acid chain: NADH-quinone oxidoreductase subunit K (100 aa).

Transmembrane regions (helical) follow at residues 1-21 (MIGL…GLAG), 28-48 (ILLL…GFVA), and 64-84 (FIIA…ILWF).

This sequence belongs to the complex I subunit 4L family. NDH-1 is composed of 14 different subunits. Subunits NuoA, H, J, K, L, M, N constitute the membrane sector of the complex.

It localises to the cell inner membrane. The catalysed reaction is a quinone + NADH + 5 H(+)(in) = a quinol + NAD(+) + 4 H(+)(out). Its function is as follows. NDH-1 shuttles electrons from NADH, via FMN and iron-sulfur (Fe-S) centers, to quinones in the respiratory chain. The immediate electron acceptor for the enzyme in this species is believed to be ubiquinone. Couples the redox reaction to proton translocation (for every two electrons transferred, four hydrogen ions are translocated across the cytoplasmic membrane), and thus conserves the redox energy in a proton gradient. The chain is NADH-quinone oxidoreductase subunit K from Helicobacter pylori (strain B38).